Consider the following 237-residue polypeptide: RING-H2 finger protein ATL57 (237 aa).

The chain crosses the membrane as a helical span at residues 51–71 (ALTIFILLVALFFMGFFSVYF). The RING-type; atypical zinc finger occupies 140-182 (CVICLSDFEEGETVKVIPHCGHVFHVDCVDTWLSSYVTCPLCR).

It belongs to the RING-type zinc finger family. ATL subfamily.

The protein localises to the membrane. The catalysed reaction is S-ubiquitinyl-[E2 ubiquitin-conjugating enzyme]-L-cysteine + [acceptor protein]-L-lysine = [E2 ubiquitin-conjugating enzyme]-L-cysteine + N(6)-ubiquitinyl-[acceptor protein]-L-lysine.. The protein operates within protein modification; protein ubiquitination. This Arabidopsis thaliana (Mouse-ear cress) protein is RING-H2 finger protein ATL57 (ATL57).